We begin with the raw amino-acid sequence, 321 residues long: 4-hydroxy-3-methylbut-2-enyl diphosphate reductase (321 aa).

Position 12 (C12) interacts with [4Fe-4S] cluster. Positions 41 and 74 each coordinate (2E)-4-hydroxy-3-methylbut-2-enyl diphosphate. Dimethylallyl diphosphate-binding residues include H41 and H74. Positions 41 and 74 each coordinate isopentenyl diphosphate. Residue C96 coordinates [4Fe-4S] cluster. H124 is a binding site for (2E)-4-hydroxy-3-methylbut-2-enyl diphosphate. Position 124 (H124) interacts with dimethylallyl diphosphate. An isopentenyl diphosphate-binding site is contributed by H124. E126 (proton donor) is an active-site residue. Residue T167 participates in (2E)-4-hydroxy-3-methylbut-2-enyl diphosphate binding. C197 contacts [4Fe-4S] cluster. (2E)-4-hydroxy-3-methylbut-2-enyl diphosphate is bound by residues S225, S226, N227, and S269. S225, S226, N227, and S269 together coordinate dimethylallyl diphosphate. Isopentenyl diphosphate is bound by residues S225, S226, N227, and S269.

The protein belongs to the IspH family. As to quaternary structure, homodimer. Requires [4Fe-4S] cluster as cofactor.

It carries out the reaction isopentenyl diphosphate + 2 oxidized [2Fe-2S]-[ferredoxin] + H2O = (2E)-4-hydroxy-3-methylbut-2-enyl diphosphate + 2 reduced [2Fe-2S]-[ferredoxin] + 2 H(+). The catalysed reaction is dimethylallyl diphosphate + 2 oxidized [2Fe-2S]-[ferredoxin] + H2O = (2E)-4-hydroxy-3-methylbut-2-enyl diphosphate + 2 reduced [2Fe-2S]-[ferredoxin] + 2 H(+). The protein operates within isoprenoid biosynthesis; dimethylallyl diphosphate biosynthesis; dimethylallyl diphosphate from (2E)-4-hydroxy-3-methylbutenyl diphosphate: step 1/1. It participates in isoprenoid biosynthesis; isopentenyl diphosphate biosynthesis via DXP pathway; isopentenyl diphosphate from 1-deoxy-D-xylulose 5-phosphate: step 6/6. Functionally, catalyzes the conversion of 1-hydroxy-2-methyl-2-(E)-butenyl 4-diphosphate (HMBPP) into a mixture of isopentenyl diphosphate (IPP) and dimethylallyl diphosphate (DMAPP). Acts in the terminal step of the DOXP/MEP pathway for isoprenoid precursor biosynthesis. The chain is 4-hydroxy-3-methylbut-2-enyl diphosphate reductase from Escherichia coli O6:K15:H31 (strain 536 / UPEC).